A 350-amino-acid chain; its full sequence is GTPase Obg (350 aa).

An Obg domain is found at 1-159 (MRFIDQTEIF…FRLHLELKLL (159 aa)). One can recognise an OBG-type G domain in the interval 160 to 328 (AEVGIIGLPN…LLQQVWEELD (169 aa)). GTP contacts are provided by residues 166–173 (GLPNAGKS), 191–195 (FTTLI), 213–216 (DIPG), 280–283 (NKID), and 309–311 (SAV). Ser-173 and Thr-193 together coordinate Mg(2+).

This sequence belongs to the TRAFAC class OBG-HflX-like GTPase superfamily. OBG GTPase family. In terms of assembly, monomer. Mg(2+) serves as cofactor.

It localises to the cytoplasm. Its function is as follows. An essential GTPase which binds GTP, GDP and possibly (p)ppGpp with moderate affinity, with high nucleotide exchange rates and a fairly low GTP hydrolysis rate. Plays a role in control of the cell cycle, stress response, ribosome biogenesis and in those bacteria that undergo differentiation, in morphogenesis control. In Acaryochloris marina (strain MBIC 11017), this protein is GTPase Obg.